The primary structure comprises 244 residues: uncharacterized protein (244 aa).

6 helical membrane-spanning segments follow: residues 5–27 (KFAL…LLAV), 37–59 (IVMV…SRFL), 87–106 (LVFI…FYYG), 116–138 (LSLF…FFVA), 159–181 (FWIW…VQPS), and 196–218 (GVFN…RMVA).

Its subcellular location is the cell membrane. This is an uncharacterized protein from Archaeoglobus fulgidus (strain ATCC 49558 / DSM 4304 / JCM 9628 / NBRC 100126 / VC-16).